The following is a 413-amino-acid chain: Probable isoleucine--tRNA ligase, mitochondrial (413 aa).

The 'KMSKS' region motif lies at 298–302; it reads KMSKS. Lys301 provides a ligand contact to ATP.

It belongs to the class-I aminoacyl-tRNA synthetase family.

It is found in the mitochondrion matrix. It catalyses the reaction tRNA(Ile) + L-isoleucine + ATP = L-isoleucyl-tRNA(Ile) + AMP + diphosphate. The sequence is that of Probable isoleucine--tRNA ligase, mitochondrial from Ciona intestinalis (Transparent sea squirt).